The following is a 298-amino-acid chain: O-glycoside alpha-1,2-mannosyltransferase homolog 6 (298 aa).

The Nucleophile role is filled by E220.

It belongs to the glycosyltransferase 15 family.

It is found in the cytoplasm. The protein resides in the nucleus. Its function is as follows. Probable mannosyltransferase involved in O-glycosylation of cell wall and secreted proteins. The chain is O-glycoside alpha-1,2-mannosyltransferase homolog 6 (omh6) from Schizosaccharomyces pombe (strain 972 / ATCC 24843) (Fission yeast).